We begin with the raw amino-acid sequence, 173 residues long: N-alpha-acetyltransferase 20 (173 aa).

Residues 2–151 (TTIRRFVCDD…DALDMRKALP (150 aa)) form the N-acetyltransferase domain.

Belongs to the acetyltransferase family. ARD1 subfamily.

Functionally, seems to be involved in N-acetylation. The sequence is that of N-alpha-acetyltransferase 20 (nat5) from Dictyostelium discoideum (Social amoeba).